A 373-amino-acid chain; its full sequence is 8-amino-7-oxononanoate synthase (373 aa).

Residue arginine 16 participates in substrate binding. 93 to 94 (GF) provides a ligand contact to pyridoxal 5'-phosphate. Residue histidine 118 participates in substrate binding. Residues serine 165, 190–193 (DEAH), and 222–225 (TFSK) each bind pyridoxal 5'-phosphate. Lysine 225 carries the post-translational modification N6-(pyridoxal phosphate)lysine. Residue threonine 334 participates in substrate binding.

Belongs to the class-II pyridoxal-phosphate-dependent aminotransferase family. BioF subfamily. Homodimer. It depends on pyridoxal 5'-phosphate as a cofactor.

The catalysed reaction is 6-carboxyhexanoyl-[ACP] + L-alanine + H(+) = (8S)-8-amino-7-oxononanoate + holo-[ACP] + CO2. The protein operates within cofactor biosynthesis; biotin biosynthesis. In terms of biological role, catalyzes the decarboxylative condensation of pimeloyl-[acyl-carrier protein] and L-alanine to produce 8-amino-7-oxononanoate (AON), [acyl-carrier protein], and carbon dioxide. This chain is 8-amino-7-oxononanoate synthase, found in Helicobacter pylori (strain ATCC 700392 / 26695) (Campylobacter pylori).